The following is a 226-amino-acid chain: Thiamine-phosphate synthase (226 aa).

Residues 46-50 (QFRDK) and D83 contribute to the 4-amino-2-methyl-5-(diphosphooxymethyl)pyrimidine site. Residues D84 and D103 each contribute to the Mg(2+) site. S122 is a 4-amino-2-methyl-5-(diphosphooxymethyl)pyrimidine binding site. 149–151 (TQS) contacts 2-[(2R,5Z)-2-carboxy-4-methylthiazol-5(2H)-ylidene]ethyl phosphate. Residue K152 coordinates 4-amino-2-methyl-5-(diphosphooxymethyl)pyrimidine. Residues G181 and 201 to 202 (IT) each bind 2-[(2R,5Z)-2-carboxy-4-methylthiazol-5(2H)-ylidene]ethyl phosphate.

Belongs to the thiamine-phosphate synthase family. It depends on Mg(2+) as a cofactor.

The enzyme catalyses 2-[(2R,5Z)-2-carboxy-4-methylthiazol-5(2H)-ylidene]ethyl phosphate + 4-amino-2-methyl-5-(diphosphooxymethyl)pyrimidine + 2 H(+) = thiamine phosphate + CO2 + diphosphate. It carries out the reaction 2-(2-carboxy-4-methylthiazol-5-yl)ethyl phosphate + 4-amino-2-methyl-5-(diphosphooxymethyl)pyrimidine + 2 H(+) = thiamine phosphate + CO2 + diphosphate. It catalyses the reaction 4-methyl-5-(2-phosphooxyethyl)-thiazole + 4-amino-2-methyl-5-(diphosphooxymethyl)pyrimidine + H(+) = thiamine phosphate + diphosphate. It participates in cofactor biosynthesis; thiamine diphosphate biosynthesis; thiamine phosphate from 4-amino-2-methyl-5-diphosphomethylpyrimidine and 4-methyl-5-(2-phosphoethyl)-thiazole: step 1/1. Condenses 4-methyl-5-(beta-hydroxyethyl)thiazole monophosphate (THZ-P) and 2-methyl-4-amino-5-hydroxymethyl pyrimidine pyrophosphate (HMP-PP) to form thiamine monophosphate (TMP). The sequence is that of Thiamine-phosphate synthase from Haemophilus influenzae (strain PittGG).